A 311-amino-acid polypeptide reads, in one-letter code: Ornithine carbamoyltransferase (311 aa).

Carbamoyl phosphate contacts are provided by residues Q85, R109, and 136 to 139 (HPCQ). L-ornithine is bound by residues N167, D231, and 235-236 (SM). Carbamoyl phosphate-binding positions include 271–272 (CL) and R299.

It belongs to the aspartate/ornithine carbamoyltransferase superfamily. OTCase family.

It is found in the cytoplasm. It carries out the reaction carbamoyl phosphate + L-ornithine = L-citrulline + phosphate + H(+). The protein operates within amino-acid biosynthesis; L-arginine biosynthesis; L-arginine from L-ornithine and carbamoyl phosphate: step 1/3. Its function is as follows. Reversibly catalyzes the transfer of the carbamoyl group from carbamoyl phosphate (CP) to the N(epsilon) atom of ornithine (ORN) to produce L-citrulline. The sequence is that of Ornithine carbamoyltransferase (argF) from Geobacillus stearothermophilus (Bacillus stearothermophilus).